We begin with the raw amino-acid sequence, 264 residues long: Methionine aminopeptidase (264 aa).

His79 serves as a coordination point for substrate. 3 residues coordinate a divalent metal cation: Asp97, Asp108, and His171. A substrate-binding site is contributed by His178. Positions 204 and 235 each coordinate a divalent metal cation.

It belongs to the peptidase M24A family. Methionine aminopeptidase type 1 subfamily. In terms of assembly, monomer. Co(2+) is required as a cofactor. Zn(2+) serves as cofactor. Requires Mn(2+) as cofactor. It depends on Fe(2+) as a cofactor.

The enzyme catalyses Release of N-terminal amino acids, preferentially methionine, from peptides and arylamides.. Removes the N-terminal methionine from nascent proteins. The N-terminal methionine is often cleaved when the second residue in the primary sequence is small and uncharged (Met-Ala-, Cys, Gly, Pro, Ser, Thr, or Val). Requires deformylation of the N(alpha)-formylated initiator methionine before it can be hydrolyzed. This chain is Methionine aminopeptidase, found in Escherichia coli O157:H7.